A 261-amino-acid chain; its full sequence is Thioredoxin-like protein HCF164, chloroplastic (261 aa).

Residues 1 to 40 (MARLVFSLNLPSSHGFNLSPRNLQSFFVTQTGAPRFRAVR) constitute a chloroplast transit peptide. A disordered region spans residues 39-91 (VRCKPNPESSETKQEKLVIDNGETSSASKEVESSSSVADSSSSSSSGFPESPN). Low complexity predominate over residues 63 to 84 (SSASKEVESSSSVADSSSSSSS). Residues 101 to 229 (VTVIAALSLF…LVENVNALAA (129 aa)) form the Thioredoxin domain. Active-site nucleophile residues include C150 and C153. A disulfide bridge connects residues C150 and C153.

It belongs to the thioredoxin family. Interacts in vitro with LTO1.

It localises to the plastid. The protein resides in the chloroplast thylakoid membrane. In terms of biological role, thiol-disulfide oxidoreductase that participates in various redox reactions in the chloroplast. Mediates the reduction of PSI-N in the thylakoid lumen. May interact and probably reduce other target proteins of the thylakoid membrane, such as FTSH2, FTSH8, LHCB5, atpA, atpB, atpE, petA and petC. Involved in the biogenesis of the plastid cytochrome b6f complex. Reducing equivalents are provided by stromal M-type thioredoxins and probably transduced through the thylakoid membrane by CCDA. Possesses low insulin disulfide bonds reducing activity. The chain is Thioredoxin-like protein HCF164, chloroplastic from Arabidopsis thaliana (Mouse-ear cress).